Here is a 336-residue protein sequence, read N- to C-terminus: Probable ADP-ribosylation factor GTPase-activating protein AGD13 (336 aa).

Residues K15–T137 form the Arf-GAP domain. The segment at C30–C53 adopts a C4-type zinc-finger fold. The C2 domain maps to R162–F280. Ca(2+) contacts are provided by D249, S252, and D255.

Ca(2+) is required as a cofactor.

Functionally, GTPase-activating protein (GAP) for ADP ribosylation factor (ARF). The polypeptide is Probable ADP-ribosylation factor GTPase-activating protein AGD13 (AGD13) (Arabidopsis thaliana (Mouse-ear cress)).